The chain runs to 568 residues: Probable WRKY transcription factor 34 (568 aa).

The WRKY 1 DNA-binding region spans 172–236 (ACCAPADDGY…YTGDHIHSKP (65 aa)). Residues Cys-203, Cys-208, His-231, and His-233 each contribute to the Zn(2+) site. 2 disordered regions span residues 230 to 252 (DHIH…TGQD) and 337 to 360 (KRRK…EPRV). A DNA-binding region (WRKY 2) is located at residues 366–431 (SDIDILDDGY…YIGKHTHVVP (66 aa)). The Zn(2+) site is built by Cys-397, Cys-402, His-426, and His-428.

It belongs to the WRKY group I family.

The protein resides in the nucleus. In terms of biological role, transcription factor. Interacts specifically with the W box (5'-(T)TGAC[CT]-3'), a frequently occurring elicitor-responsive cis-acting element. In Arabidopsis thaliana (Mouse-ear cress), this protein is Probable WRKY transcription factor 34 (WRKY34).